The following is an 86-amino-acid chain: Neurotoxin LmNaTx17 (86 aa).

Residues 1-18 (MKILFVIVLAAFFIGVHC) form the signal peptide. In terms of domain architecture, LCN-type CS-alpha/beta spans 19–85 (KHGYPVQYSG…TWDYKTGKCR (67 aa)). 4 cysteine pairs are disulfide-bonded: Cys33–Cys84, Cys37–Cys58, Cys44–Cys65, and Cys48–Cys67.

The protein belongs to the long (4 C-C) scorpion toxin superfamily. Sodium channel inhibitor family. Beta subfamily. Expressed by the venom gland.

The protein localises to the secreted. In terms of biological role, binds voltage-independently at site-4 of sodium channels (Nav) and shift the voltage of activation toward more negative potentials thereby affecting sodium channel activation and promoting spontaneous and repetitive firing. This Lychas mucronatus (Chinese swimming scorpion) protein is Neurotoxin LmNaTx17.